A 383-amino-acid polypeptide reads, in one-letter code: Neuropeptide Y receptor type 1 (383 aa).

Topologically, residues 1–34 (MNSTSFSQLENHSVHYNLSEEKPSFFAFENDDCH) are extracellular. N-linked (GlcNAc...) asparagine glycans are attached at residues asparagine 2, asparagine 11, and asparagine 17. A helical transmembrane segment spans residues 35–55 (LPLAVIFTLALAYGAVIILGV). Topologically, residues 56–87 (SGNLALILIILKQKEMRNVTNILIVNLSFSDL) are cytoplasmic. The chain crosses the membrane as a helical span at residues 88–108 (LVAIMCLPFTFVYTLMDHWIF). Over 109 to 116 (GEIMCKLN) the chain is Extracellular. Cysteine 113 and cysteine 198 form a disulfide bridge. Residues 117 to 137 (PFVQCVSITVSIFSLVLIAVE) traverse the membrane as a helical segment. Residues 138–154 (RHQLIINPRGWRPNNRH) lie on the Cytoplasmic side of the membrane. A helical transmembrane segment spans residues 155–175 (AYIGIAVIWVLAVASSLPFMI). Over 176–211 (YQVLTDEPFQNVTLDAFKDKLVCFDQFPSDSHRLSY) the chain is Extracellular. The helical transmembrane segment at 212–232 (TTLLLVLQYFGPLCFIFICYF) threads the bilayer. Over 233 to 260 (KIYIRLKRRNNMMDKMRDSKYRSSESKR) the chain is Cytoplasmic. A helical membrane pass occupies residues 261-281 (INIMLLSIVVAFAVCWLPLTI). At 282–299 (FNTVFDWNHQIIATCNHN) the chain is on the extracellular side. Residues 300–320 (LLFLLCHLTAMISTCVNPIFY) form a helical membrane-spanning segment. Over 321–383 (GFLNKNFQRD…KISCVENEKI (63 aa)) the chain is Cytoplasmic. Cysteine 338 carries S-palmitoyl cysteine lipidation. Serine 368 and serine 376 each carry phosphoserine.

This sequence belongs to the G-protein coupled receptor 1 family.

Its subcellular location is the cell membrane. In terms of biological role, receptor for neuropeptide Y and peptide YY. The polypeptide is Neuropeptide Y receptor type 1 (NPY1R) (Cavia porcellus (Guinea pig)).